The primary structure comprises 387 residues: MEVLAAETTSQQERLQAIAEKRKRQAEIENKRRQLEDERRQLQHLKSKALRERWLLEGTPSSASEGDEDLRRQMQDDEQKTRLLEDSVSRLEKEIEVLERGDSAPATAKENAAAPSPVRAPAPSPAKEERKTEVVMNSQQTPVGTPKDKRVSNTPLRTVDGSPMMKAAMYSVEITVEKDKVTGETRVLSSTTLLPRQPLPLGIKVYEDETKVVHAVDGTAENGIHPLSSSEVDELIHKADEVTLSEAGSTAGAAETRGAVEGAARTTPSRREITGVQAQPGEATSGPPGIQPGQEPPVTMIFMGYQNVEDEAETKKVLGLQDTITAELVVIEDAAEPKEPAPPNGSAAEPPTEAASREENQAGPEATTSDPQDLDMKKHRCKCCSIM.

M1 is modified (N-acetylmethionine). Residues 9–101 (TSQQERLQAI…EKEIEVLERG (93 aa)) are a coiled coil. 2 stretches are compositionally biased toward basic and acidic residues: residues 31 to 41 (KRRQLEDERRQ) and 69 to 102 (DLRRQMQDDEQKTRLLEDSVSRLEKEIEVLERGD). The segment at 31–160 (KRRQLEDERR…VSNTPLRTVD (130 aa)) is disordered. The segment covering 104-117 (APATAKENAAAPSP) has biased composition (low complexity). 2 positions are modified to phosphoserine: S116 and S124. A phosphothreonine mark is found at T141 and T145. Position 162 is a phosphoserine (S162). T243 carries the phosphothreonine modification. S245 carries the phosphoserine modification. 2 disordered regions span residues 247 to 296 (AGST…GQEP) and 335 to 378 (AEPK…DMKK). Over residues 286–296 (GPPGIQPGQEP) the composition is skewed to low complexity. S346 is subject to Phosphoserine. Position 367 is a phosphothreonine (T367). The residue at position 369 (S369) is a Phosphoserine. 2 S-palmitoyl cysteine lipidation sites follow: C381 and C383. The residue at position 384 (C384) is a Cysteine methyl ester. C384 is lipidated: S-farnesyl cysteine. A propeptide spans 385–387 (SIM) (removed in mature form).

The protein belongs to the paralemmin family. Interacts with dopamine receptor DRD3. As to expression, widely expressed with highest expression in brain and testis and intermediate expression in heart and adrenal gland.

It localises to the cell membrane. The protein resides in the cell projection. It is found in the filopodium membrane. The protein localises to the axon. Its subcellular location is the dendrite. It localises to the dendritic spine. The protein resides in the basolateral cell membrane. It is found in the apicolateral cell membrane. Functionally, involved in plasma membrane dynamics and cell process formation. Isoform 1 and isoform 2 are necessary for axonal and dendritic filopodia induction, for dendritic spine maturation and synapse formation in a palmitoylation-dependent manner. This Homo sapiens (Human) protein is Paralemmin-1 (PALM).